We begin with the raw amino-acid sequence, 613 residues long: Sulfhydryl oxidase 1 (613 aa).

An N-terminal signal peptide occupies residues 1-30; it reads MTGCGRRSGWLPPLRLLLLPLLLGGPGVGA. The 121-residue stretch at 37 to 157 folds into the Thioredoxin domain; it reads YSASDPLTLL…RERLIDALES (121 aa). Active-site nucleophile residues include C71 and C74. Disulfide bonds link C71-C74 and C102-C111. N-linked (GlcNAc...) asparagine glycans are attached at residues N131 and N244. An intrachain disulfide couples C394 to C406. The ERV/ALR sulfhydryl oxidase domain occupies 397–504; sequence SESHFRGFPC…EDPQFPKVQW (108 aa). 3 residues coordinate FAD: R402, W409, and H413. The residue at position 427 (S427) is a Phosphoserine. C450 and C453 are disulfide-bonded. FAD contacts are provided by residues D452, H456, 479 to 486, K501, and W504; that span reads WTSHNRVN. A disulfide bridge links C510 with C513.

The protein belongs to the quiescin-sulfhydryl oxidase (QSOX) family. In terms of assembly, monomer. It depends on FAD as a cofactor. N-glycosylated. O-glycosylated on Thr and Ser residues. In terms of tissue distribution, detected in endometrium and in uterus glandular epithelial cells (at protein level). Expressed in testis, placenta, pancreas, lung, ovary, endometrium, but not in brain, liver and kidney tissues. Higher expression in epithelial cells.

Its subcellular location is the secreted. It catalyses the reaction 2 R'C(R)SH + O2 = R'C(R)S-S(R)CR' + H2O2. Its function is as follows. Catalyzes the oxidation of sulfhydryl groups in peptide and protein thiols to disulfides with the reduction of oxygen to hydrogen peroxide. Plays a role in disulfide bond formation in a variety of extracellular proteins. In fibroblasts, required for normal incorporation of laminin into the extracellular matrix, and thereby for normal cell-cell adhesion and cell migration. The protein is Sulfhydryl oxidase 1 (QSOX1) of Cavia porcellus (Guinea pig).